We begin with the raw amino-acid sequence, 513 residues long: Glycogen synthase (513 aa).

Lysine 47 serves as a coordination point for ADP-alpha-D-glucose.

It belongs to the glycosyltransferase 1 family. Bacterial/plant glycogen synthase subfamily.

It catalyses the reaction [(1-&gt;4)-alpha-D-glucosyl](n) + ADP-alpha-D-glucose = [(1-&gt;4)-alpha-D-glucosyl](n+1) + ADP + H(+). The protein operates within glycan biosynthesis; glycogen biosynthesis. Its function is as follows. Synthesizes alpha-1,4-glucan chains using ADP-glucose. The sequence is that of Glycogen synthase from Pseudomonas aeruginosa (strain ATCC 15692 / DSM 22644 / CIP 104116 / JCM 14847 / LMG 12228 / 1C / PRS 101 / PAO1).